The chain runs to 247 residues: V-type proton ATPase subunit D (247 aa).

The protein belongs to the V-ATPase D subunit family. As to quaternary structure, V-ATPase is a heteromultimeric enzyme made up of two complexes: the ATP-hydrolytic V1 complex and the proton translocation V0 complex. The V1 complex consists of three catalytic AB heterodimers that form a heterohexamer, three peripheral stalks each consisting of EG heterodimers, one central rotor including subunits D and F, and the regulatory subunits C and H. The proton translocation complex V0 consists of the proton transport subunit a, a ring of proteolipid subunits c9c'', rotary subunit d, subunits e and f, and the accessory subunits ATP6AP1/Ac45 and ATP6AP2/PRR. Interacts with SNX10. In terms of tissue distribution, expressed in brain (at protein level). Present in tissues active in secretion. Amounts elevated in brain, kidney and testis.

It localises to the membrane. Its subcellular location is the cytoplasmic vesicle. The protein resides in the clathrin-coated vesicle membrane. The protein localises to the cytoplasm. It is found in the cytoskeleton. It localises to the microtubule organizing center. Its subcellular location is the centrosome. The protein resides in the cell projection. The protein localises to the cilium. Subunit of the V1 complex of vacuolar(H+)-ATPase (V-ATPase), a multisubunit enzyme composed of a peripheral complex (V1) that hydrolyzes ATP and a membrane integral complex (V0) that translocates protons. V-ATPase is responsible for acidifying and maintaining the pH of intracellular compartments and in some cell types, is targeted to the plasma membrane, where it is responsible for acidifying the extracellular environment. May play a role in cilium biogenesis through regulation of the transport and the localization of proteins to the cilium. The chain is V-type proton ATPase subunit D (ATP6V1D) from Bos taurus (Bovine).